Consider the following 500-residue polypeptide: L-arabinose isomerase (500 aa).

Mn(2+) is bound by residues Glu-306, Glu-333, His-350, and His-450.

Belongs to the arabinose isomerase family. In terms of assembly, homohexamer. Mn(2+) is required as a cofactor.

The enzyme catalyses beta-L-arabinopyranose = L-ribulose. It participates in carbohydrate degradation; L-arabinose degradation via L-ribulose; D-xylulose 5-phosphate from L-arabinose (bacterial route): step 1/3. In terms of biological role, catalyzes the conversion of L-arabinose to L-ribulose. The protein is L-arabinose isomerase of Enterobacter sp. (strain 638).